Here is a 734-residue protein sequence, read N- to C-terminus: Photosystem I P700 chlorophyll a apoprotein A2 (734 aa).

8 helical membrane passes run 46–69 (IFASHFGQLAIIFLWTSGNLFHVA), 135–158 (LYNGALFLVILSSISLIAGWLHLQ), 175–199 (LNHHLSGLFGVSSLAWTGHLVHVAI), 273–291 (IAHHHLAIAVVFIIAGHMY), 330–353 (LHFQLGLALASLGVITSLVAQHMY), 369–395 (AALYTHHQYIAGFIMTGAFAHGAIFFI), 417–439 (AIISHLSWASLFLGFHTLGLYVH), and 517–535 (FLVHHAIALGLHTTTLILV). [4Fe-4S] cluster contacts are provided by Cys559 and Cys568. A run of 2 helical transmembrane segments spans residues 575–596 (AFYLAVFWMLNTIGWVTFYWHW) and 643–665 (LSVWAWMFLFGHLVWATGFMFLI). Positions 654, 662, and 670 each coordinate chlorophyll a. A phylloquinone-binding site is contributed by Trp671. A helical transmembrane segment spans residues 707 to 727 (LVGLAHFSVGYIFTYAAFLIA).

This sequence belongs to the PsaA/PsaB family. As to quaternary structure, the PsaA/B heterodimer binds the P700 chlorophyll special pair and subsequent electron acceptors. PSI consists of a core antenna complex that captures photons, and an electron transfer chain that converts photonic excitation into a charge separation. The eukaryotic PSI reaction center is composed of at least 11 subunits. The cofactor is P700 is a chlorophyll a/chlorophyll a' dimer, A0 is one or more chlorophyll a, A1 is one or both phylloquinones and FX is a shared 4Fe-4S iron-sulfur center..

The protein resides in the plastid. Its subcellular location is the chloroplast thylakoid membrane. It carries out the reaction reduced [plastocyanin] + hnu + oxidized [2Fe-2S]-[ferredoxin] = oxidized [plastocyanin] + reduced [2Fe-2S]-[ferredoxin]. In terms of biological role, psaA and PsaB bind P700, the primary electron donor of photosystem I (PSI), as well as the electron acceptors A0, A1 and FX. PSI is a plastocyanin-ferredoxin oxidoreductase, converting photonic excitation into a charge separation, which transfers an electron from the donor P700 chlorophyll pair to the spectroscopically characterized acceptors A0, A1, FX, FA and FB in turn. Oxidized P700 is reduced on the lumenal side of the thylakoid membrane by plastocyanin. The sequence is that of Photosystem I P700 chlorophyll a apoprotein A2 from Marchantia polymorpha (Common liverwort).